A 460-amino-acid chain; its full sequence is MLSIYNTLTKSKEVFKPLDGNKVRMYVCGMTVYDYCHLGHGRSMVAFDLVTRWLRFSGYDLTYVRNITDIDDKIINRARDNGESFDALTARMIDAMHEDEARLNILKPDMEPRATDHIPGMHAMIQTLIDKGYAYAPGNGDVYYRVGKFQGYGKLSRKKIEDLRIGARIEVDESKQDPLDFVLWKGVKPGEPSWESPWGAGRPGWHIECSVMSTCCLGDTFDIHGGGSDLEFPHHENEIAQSEAATGKPYANAWLHCGMIRINGEKMSKSLNNFFTLRDVLEKYHPEVVRYLLVSSHYRSAINYSEDSLRESKAALERFYHALKGLPAAEPAGGEAFVERFTTAMNDDFGTPEACAVLFEMVREINRLRETDVAAAAGLAARLKQLASVLGVLQLEADDFLRAGAQGRVDAAEVEALIQARLAARAAKDWAESDRIRDQITAMGVLLEDGKGGTTWRLGD.

Cys-28 serves as a coordination point for Zn(2+). The short motif at 30 to 40 is the 'HIGH' region element; that stretch reads MTVYDYCHLGH. 3 residues coordinate Zn(2+): Cys-209, His-234, and Glu-238. Residues 266–270 carry the 'KMSKS' region motif; that stretch reads KMSKS. Lys-269 lines the ATP pocket.

Belongs to the class-I aminoacyl-tRNA synthetase family. As to quaternary structure, monomer. Requires Zn(2+) as cofactor.

Its subcellular location is the cytoplasm. It carries out the reaction tRNA(Cys) + L-cysteine + ATP = L-cysteinyl-tRNA(Cys) + AMP + diphosphate. The chain is Cysteine--tRNA ligase from Pseudomonas syringae pv. tomato (strain ATCC BAA-871 / DC3000).